Consider the following 165-residue polypeptide: Peptide methionine sulfoxide reductase MsrA (165 aa).

Cys10 is an active-site residue.

Belongs to the MsrA Met sulfoxide reductase family.

The enzyme catalyses L-methionyl-[protein] + [thioredoxin]-disulfide + H2O = L-methionyl-(S)-S-oxide-[protein] + [thioredoxin]-dithiol. The catalysed reaction is [thioredoxin]-disulfide + L-methionine + H2O = L-methionine (S)-S-oxide + [thioredoxin]-dithiol. Has an important function as a repair enzyme for proteins that have been inactivated by oxidation. Catalyzes the reversible oxidation-reduction of methionine sulfoxide in proteins to methionine. The sequence is that of Peptide methionine sulfoxide reductase MsrA from Campylobacter jejuni (strain RM1221).